The primary structure comprises 1088 residues: MGKYNLILSEYLSFIYNSQSAVQIPIYYSSNSELENRCIEFHSKCLENSKNGLSLRKLFVEYNDVIENATLLSILSYSYDKYNAVERKLVKYAKGKPLEADLTVNELDYENNKMTSELFPTAEEYTDSLMDPAILTSLSSNLNAVMFWLEKHENDVAEKLKVYKRRLDLFTIVASTINKYGVPRHNAKYRYEYDVMKDKPYYLVTWANSSIEMLMSVFSHDDYLIAKELIVLSYSNRSTLAKLVSSPMSILVALVDINGTFITNEELELEFSNKYVRAIVPDQTFDELNQMLDNMRKAGLVDIPKMIQDWLVDRSIEKFPLMAKIYSWSFHVGFRKQKMLDAALDQLKTEYTENVDDEMYREYTMLIRDEVVKMLEEPVKHDDHLLRDSELAGLLSMSSASNGESRQLKFGRKTIFSTKKNMHVMDDMANERYTPGIIPPVNVDKPIPLGRRDVPGRRTRIIFILPYEYFIAQHAVVEKMLIYAKHTREYAEFYSQSNQLLSYGDVTRFLSNNTMVLYTDVSQWDSSQHNTQPFRKGIIMGLDILANMTNDAKVLQTLNLYKQTQINLMDSYVQIPDGNVIKKIQYGAVASGEKQTKAANSIANLALIKTVLSRISNKHSFATKIIRVDGDDNYAVLQFNTEVTKQMIQDVSNDVRETYARMNAKVKALVSTVGIEIAKRYIAGGKIFFRAGINLLNNEKRGQSTQWDQAAILYSNYIVNRLRGFETDREFILTKIMQMTSVAITGSLRLFPSERVLTTNSTFKVFDSEDFIIEYGTTVDEVYIQRAFMSLSSQKSGIADEIAASSTFKNYVTRLSEQLLFSKNNIVSRGIALTEKAKLNSYAPISLEKRRAQISALLTMLQKPVTFKSSKITINDILRDIKPFFTVSDAHLPIQYQKFMPTLPDNVQYIIQCIGSRTYQIEDDGSKSAISRLISKYSVYKPSIEELYKVISLHENEIQLYLISLGIPKIDADTYVGSKIYSRDKYRILESYVYNLLSINYGCYQLFDFNSPDLEKLIRIPFKGKIPAVTFILHLYAKLEVINYAIKNGSWISLFCNYPKSEMIKLWKKMWNITSLRSPYTNANFFQE.

The RdRp catalytic domain occupies 501–687; it reads LSYGDVTRFL…AKRYIAGGKI (187 aa).

Belongs to the reoviridae RNA-directed RNA polymerase family. Interacts with VP3 (Potential). Interacts with VP2; this interaction activates VP1. Interacts with NSP5; this interaction is probably necessary for the formation of functional virus factories. Interacts with NSP2; this interaction is weak. Mg(2+) is required as a cofactor.

Its subcellular location is the virion. It catalyses the reaction RNA(n) + a ribonucleoside 5'-triphosphate = RNA(n+1) + diphosphate. RNA-directed RNA polymerase that is involved in both transcription and genome replication. Together with VP3 capping enzyme, forms an enzyme complex positioned near the channels situated at each of the five-fold vertices of the core. Following infection, the outermost layer of the virus is lost, leaving a double-layered particle (DLP) made up of the core and VP6 shell. VP1 then catalyzes the transcription of fully conservative plus-strand genomic RNAs that are extruded through the DLP's channels into the cytoplasm where they function as mRNAs for translation of viral proteins. One copy of each of the viral (+)RNAs is also recruited during core assembly, together with newly synthesized polymerase complexes and VP2. The polymerase of these novo-formed particles catalyzes the synthesis of complementary minus-strands leading to dsRNA formation. To do so, the polymerase specifically recognizes and binds 4 bases 5'-UGUG-3' in the conserved 3'-sequence of plus-strand RNA templates. VP2 presumably activates the autoinhibited VP1-RNA complex to coordinate packaging and genome replication. Once dsRNA synthesis is complete, the polymerase switches to the transcriptional mode, thus providing secondary transcription. This chain is RNA-directed RNA polymerase, found in Rotavirus A (strain RVA/SA11-Patton/G3P[X]) (RV-A).